A 133-amino-acid chain; its full sequence is Small heat shock protein ibp (133 aa).

A sHSP domain is found at 11-126; that stretch reads EQPLSENPNY…KPKKISINEE (116 aa).

It belongs to the small heat shock protein (HSP20) family.

In Wigglesworthia glossinidia brevipalpis, this protein is Small heat shock protein ibp (ibp).